The chain runs to 547 residues: MSTASSSSSSSSSQTPHPPSQRMRRSAAGSPPAVAAAGSGNGAGGGGGVGCAPAAGAGRLLQPIRATVPYQLLRGSQHSPTRPPVAAAAASLGSLPGPGAARGPSPSSPTPPAAAAPAEQAPRAKGRPRRSPESHRRSSSPERRSPGSPVCRADKAKSQQVRTSSTIRRTSSLDTITGPYLTGQWPRDPHVHYPSCMKDKATQTPSCWAEEGAEKRSHQRSASWGSADQLKEQIAKLRQQLQRSKQSSRHSKEKDRQSPLHGNHITISHTQATGSRSVPMPLSNISVPKSSVSRVPCNVEGISPELEKVFIKENNGKEEVSKPLDIPDGRRAPLPAHYRSSSTRSIDTQTPSVQERSSSCSSHSPCVSPFCPPESQDGSPCSTEDLLYDRDKDSGSSSPLPKYASSPKPNNSYMFKREPPEGCERVKVFEEMASRQPISAPLFSCPDKNKVNFIPTGSAFCPVKLLGPLLPASDLMLKNSPNSGQSSALATLTVEQLSSRVSFTSLSDDTSTAGSMEASVQQPSQQQQLLQELQGEDHISAQNYVII.

Residues 1 to 13 (MSTASSSSSSSSS) are compositionally biased toward low complexity. 2 disordered regions span residues 1–55 (MSTA…APAA) and 72–285 (LLRG…LSNI). At Ser-20 the chain carries Phosphoserine. Over residues 26-38 (SAAGSPPAVAAAG) the composition is skewed to low complexity. A compositionally biased stretch (gly residues) spans 39 to 50 (SGNGAGGGGGVG). Residues Ser-79, Ser-105, Ser-107, and Ser-108 each carry the phosphoserine modification. Low complexity predominate over residues 86 to 105 (AAAAASLGSLPGPGAARGPS). A Phosphothreonine modification is found at Thr-110. Residues 130 to 145 (RSPESHRRSSSPERRS) show a composition bias toward basic and acidic residues. The span at 162-177 (RTSSTIRRTSSLDTIT) shows a compositional bias: low complexity. Residues Ser-171 and Ser-172 each carry the phosphoserine modification. A phosphothreonine mark is found at Thr-175 and Thr-177. Basic and acidic residues predominate over residues 187–201 (RDPHVHYPSCMKDKA). Ser-223 bears the Phosphoserine mark. Residues 225-254 (GSADQLKEQIAKLRQQLQRSKQSSRHSKEK) are a coiled coil. Residues 236–245 (KLRQQLQRSK) show a composition bias toward low complexity. The residue at position 258 (Ser-258) is a Phosphoserine. Residues 265-276 (ITISHTQATGSR) are compositionally biased toward polar residues. Thr-266 is modified (phosphothreonine). A Phosphoserine modification is found at Ser-303. Residues 319-331 (EVSKPLDIPDGRR) are compositionally biased toward basic and acidic residues. The segment at 319-417 (EVSKPLDIPD…KPNNSYMFKR (99 aa)) is disordered. Positions 339-356 (RSSSTRSIDTQTPSVQER) are enriched in polar residues. Thr-343 is modified (phosphothreonine). Ser-345 is modified (phosphoserine). Thr-350 carries the phosphothreonine modification. Residues 357–369 (SSSCSSHSPCVSP) show a composition bias toward low complexity. Ser-394, Ser-398, Ser-406, Ser-412, and Ser-480 each carry phosphoserine. Residues 505–520 (SLSDDTSTAGSMEASV) are compositionally biased toward polar residues. The segment at 505–530 (SLSDDTSTAGSMEASVQQPSQQQQLL) is disordered. Residues 521–530 (QQPSQQQQLL) show a composition bias toward low complexity.

In terms of tissue distribution, predominantly expressed in lung, spleen, thymus and testis and, at lower levels, in brain, bone marrow, peripheral leukocytes, skin and trachea.

This Homo sapiens (Human) protein is Glucocorticoid-induced transcript 1 protein (GLCCI1).